Here is a 78-residue protein sequence, read N- to C-terminus: Small ribosomal subunit protein bS18 (78 aa).

The protein belongs to the bacterial ribosomal protein bS18 family. In terms of assembly, part of the 30S ribosomal subunit. Forms a tight heterodimer with protein bS6.

Functionally, binds as a heterodimer with protein bS6 to the central domain of the 16S rRNA, where it helps stabilize the platform of the 30S subunit. The sequence is that of Small ribosomal subunit protein bS18 from Nocardioides sp. (strain ATCC BAA-499 / JS614).